Here is a 302-residue protein sequence, read N- to C-terminus: Protoheme IX farnesyltransferase (302 aa).

9 helical membrane passes run 28 to 48, 50 to 70, 95 to 115, 122 to 142, 150 to 170, 176 to 196, 221 to 241, 243 to 263, and 282 to 302; these read VVAL…PGVP, WSVL…AAVV, IAPL…MVVL, LTAW…TLFL, IVIG…AVTG, ALLL…ALAI, LHIL…FVTG, SGGI…QYAV, and ITYL…FVPA.

Belongs to the UbiA prenyltransferase family. Protoheme IX farnesyltransferase subfamily.

Its subcellular location is the cell inner membrane. It carries out the reaction heme b + (2E,6E)-farnesyl diphosphate + H2O = Fe(II)-heme o + diphosphate. The protein operates within porphyrin-containing compound metabolism; heme O biosynthesis; heme O from protoheme: step 1/1. Its function is as follows. Converts heme B (protoheme IX) to heme O by substitution of the vinyl group on carbon 2 of heme B porphyrin ring with a hydroxyethyl farnesyl side group. This chain is Protoheme IX farnesyltransferase, found in Marinobacter nauticus (strain ATCC 700491 / DSM 11845 / VT8) (Marinobacter aquaeolei).